A 541-amino-acid chain; its full sequence is Membrane protein insertase YidC (541 aa).

6 helical membrane passes run 6-26 (NLLL…WESD), 326-346 (VVDY…LMFF), 349-369 (LVHN…GLLY), 420-440 (GGCL…WVLL), 457-477 (LSVQ…MWAM), and 500-520 (MIFT…WLVG).

It belongs to the OXA1/ALB3/YidC family. Type 1 subfamily. As to quaternary structure, interacts with the Sec translocase complex via SecD. Specifically interacts with transmembrane segments of nascent integral membrane proteins during membrane integration.

It localises to the cell inner membrane. Required for the insertion and/or proper folding and/or complex formation of integral membrane proteins into the membrane. Involved in integration of membrane proteins that insert both dependently and independently of the Sec translocase complex, as well as at least some lipoproteins. Aids folding of multispanning membrane proteins. In Shewanella amazonensis (strain ATCC BAA-1098 / SB2B), this protein is Membrane protein insertase YidC.